Reading from the N-terminus, the 428-residue chain is Glutamate-1-semialdehyde 2,1-aminomutase (428 aa).

Lys-265 is modified (N6-(pyridoxal phosphate)lysine).

This sequence belongs to the class-III pyridoxal-phosphate-dependent aminotransferase family. HemL subfamily. In terms of assembly, homodimer. The cofactor is pyridoxal 5'-phosphate.

The protein localises to the cytoplasm. It carries out the reaction (S)-4-amino-5-oxopentanoate = 5-aminolevulinate. Its pathway is porphyrin-containing compound metabolism; protoporphyrin-IX biosynthesis; 5-aminolevulinate from L-glutamyl-tRNA(Glu): step 2/2. The chain is Glutamate-1-semialdehyde 2,1-aminomutase from Shewanella frigidimarina (strain NCIMB 400).